The primary structure comprises 187 residues: Imidazoleglycerol-phosphate dehydratase (187 aa).

The protein belongs to the imidazoleglycerol-phosphate dehydratase family.

The protein resides in the cytoplasm. It catalyses the reaction D-erythro-1-(imidazol-4-yl)glycerol 3-phosphate = 3-(imidazol-4-yl)-2-oxopropyl phosphate + H2O. The protein operates within amino-acid biosynthesis; L-histidine biosynthesis; L-histidine from 5-phospho-alpha-D-ribose 1-diphosphate: step 6/9. This chain is Imidazoleglycerol-phosphate dehydratase, found in Pyrobaculum calidifontis (strain DSM 21063 / JCM 11548 / VA1).